Here is a 383-residue protein sequence, read N- to C-terminus: Lipid-A-disaccharide synthase (383 aa).

The protein belongs to the LpxB family.

It carries out the reaction 2-N,3-O-bis[(3R)-3-hydroxytetradecanoyl]-alpha-D-glucosaminyl 1-phosphate + UDP-2-N,3-O-bis[(3R)-3-hydroxytetradecanoyl]-alpha-D-glucosamine = lipid A disaccharide (E. coli) + UDP + H(+). The enzyme catalyses a lipid X + a UDP-2-N,3-O-bis[(3R)-3-hydroxyacyl]-alpha-D-glucosamine = a lipid A disaccharide + UDP + H(+). The protein operates within glycolipid biosynthesis; lipid IV(A) biosynthesis; lipid IV(A) from (3R)-3-hydroxytetradecanoyl-[acyl-carrier-protein] and UDP-N-acetyl-alpha-D-glucosamine: step 5/6. In terms of biological role, condensation of UDP-2,3-diacylglucosamine and 2,3-diacylglucosamine-1-phosphate to form lipid A disaccharide, a precursor of lipid A, a phosphorylated glycolipid that anchors the lipopolysaccharide to the outer membrane of the cell. This chain is Lipid-A-disaccharide synthase, found in Pectobacterium carotovorum subsp. carotovorum (strain PC1).